Consider the following 237-residue polypeptide: N-alpha-acetyltransferase 40 (237 aa).

A lipid anchor (N-myristoyl glycine) is attached at Gly-2. Residues 63-216 (SGLEPATVDW…EDCSYEILSR (154 aa)) enclose the N-acetyltransferase domain. Substrate-binding positions include Tyr-85, 127 to 129 (DVE), and Tyr-138. Acetyl-CoA-binding positions include 140–142 (VQL) and 148–153 (RKGLGK). Thr-174 is a binding site for substrate. An acetyl-CoA-binding site is contributed by Asn-179. Substrate-binding residues include Ser-197 and Tyr-211.

It belongs to the acetyltransferase family. NAA40 subfamily.

Its subcellular location is the cytoplasm. It is found in the nucleus. It catalyses the reaction N-terminal L-seryl-[histone H4] + acetyl-CoA = N-terminal N(alpha)-acetyl-L-seryl-[histone H4] + CoA + H(+). The catalysed reaction is N-terminal L-seryl-[histone H2A] + acetyl-CoA = N-terminal N(alpha)-acetyl-L-seryl-[histone H2A] + CoA + H(+). Its function is as follows. N-alpha-acetyltransferase that specifically mediates the acetylation of the N-terminal residues of histones H4 and H2A. In contrast to other N-alpha-acetyltransferase, has a very specific selectivity for histones H4 and H2A N-terminus and specifically recognizes the 'Ser-Gly-Arg-Gly sequence'. Acts as a negative regulator of apoptosis. May play a role in hepatic lipid metabolism. The polypeptide is N-alpha-acetyltransferase 40 (Mus musculus (Mouse)).